The sequence spans 391 residues: Terminal nucleotidyltransferase 5C (391 aa).

Belongs to the TENT family. Interacts with BCCIP and PABPC1; the interaction has no effect on TENT5C poly(A) polymerase function. Interacts with PLK4; this interaction leads to the TENT5C recruitment into the centrosome. In terms of tissue distribution, expressed by splenocytes, expression is increased in activated splenocytes.

It is found in the nucleus. It localises to the cytoplasm. The protein localises to the cytoskeleton. Its subcellular location is the microtubule organizing center. The protein resides in the centrosome. The catalysed reaction is RNA(n) + ATP = RNA(n)-3'-adenine ribonucleotide + diphosphate. Its function is as follows. Catalyzes the transfer of one adenosine molecule from an ATP to an mRNA poly(A) tail bearing a 3'-OH terminal group and enhances mRNA stability and gene expression. Can also elongate RNA oligos ending with uridine molecule, provided that the sequence is adenosine-rich. Mainly targets mRNAs encoding endoplasmic reticulum-targeted protein. The polypeptide is Terminal nucleotidyltransferase 5C (Mus musculus (Mouse)).